The following is a 792-amino-acid chain: LPS-assembly protein LptD (792 aa).

The signal sequence occupies residues 1–22 (MYRVLRLLPLPLSVAISLSALA).

The protein belongs to the LptD family. Component of the lipopolysaccharide transport and assembly complex. Interacts with LptE and LptA.

It is found in the cell outer membrane. In terms of biological role, together with LptE, is involved in the assembly of lipopolysaccharide (LPS) at the surface of the outer membrane. The protein is LPS-assembly protein LptD of Xylella fastidiosa (strain 9a5c).